Consider the following 267-residue polypeptide: Tryptophan synthase alpha chain (267 aa).

Residues E43 and D54 each act as proton acceptor in the active site.

Belongs to the TrpA family. Tetramer of two alpha and two beta chains.

The catalysed reaction is (1S,2R)-1-C-(indol-3-yl)glycerol 3-phosphate + L-serine = D-glyceraldehyde 3-phosphate + L-tryptophan + H2O. Its pathway is amino-acid biosynthesis; L-tryptophan biosynthesis; L-tryptophan from chorismate: step 5/5. In terms of biological role, the alpha subunit is responsible for the aldol cleavage of indoleglycerol phosphate to indole and glyceraldehyde 3-phosphate. This is Tryptophan synthase alpha chain from Bacillus subtilis (strain 168).